Here is a 147-residue protein sequence, read N- to C-terminus: Protein LOL4 (147 aa).

3 putative zinc finger regions span residues 4 to 34 (QLIC…LTAV), 44 to 74 (ELIC…LNST), and 82 to 112 (HLTC…VNHV).

The protein localises to the nucleus. Putative zinc finger that may be involved in programmed cell death and defense response. In Oryza sativa subsp. japonica (Rice), this protein is Protein LOL4 (LOL4).